A 673-amino-acid chain; its full sequence is DNA ligase (673 aa).

Residues 32-36, 81-82, and E111 each bind NAD(+); these read DHVYD and SL. K113 serves as the catalytic N6-AMP-lysine intermediate. NAD(+) is bound by residues R134, E171, K286, and K310. Positions 404, 407, 422, and 428 each coordinate Zn(2+). Residues 595–673 form the BRCT domain; sequence NIIDEYKNKT…NEFWKKDNNF (79 aa).

It belongs to the NAD-dependent DNA ligase family. LigA subfamily. Mg(2+) is required as a cofactor. The cofactor is Mn(2+).

It carries out the reaction NAD(+) + (deoxyribonucleotide)n-3'-hydroxyl + 5'-phospho-(deoxyribonucleotide)m = (deoxyribonucleotide)n+m + AMP + beta-nicotinamide D-nucleotide.. DNA ligase that catalyzes the formation of phosphodiester linkages between 5'-phosphoryl and 3'-hydroxyl groups in double-stranded DNA using NAD as a coenzyme and as the energy source for the reaction. It is essential for DNA replication and repair of damaged DNA. This Ureaplasma urealyticum serovar 10 (strain ATCC 33699 / Western) protein is DNA ligase.